Consider the following 368-residue polypeptide: tRNA(Met) cytidine acetate ligase (368 aa).

ATP-binding positions include 7–20, G96, N152, and R175; that span reads IAEF…HKYL.

This sequence belongs to the TmcAL family.

It is found in the cytoplasm. It carries out the reaction cytidine(34) in elongator tRNA(Met) + acetate + ATP = N(4)-acetylcytidine(34) in elongator tRNA(Met) + AMP + diphosphate. Functionally, catalyzes the formation of N(4)-acetylcytidine (ac(4)C) at the wobble position of elongator tRNA(Met), using acetate and ATP as substrates. First activates an acetate ion to form acetyladenylate (Ac-AMP) and then transfers the acetyl group to tRNA to form ac(4)C34. This chain is tRNA(Met) cytidine acetate ligase, found in Streptococcus pyogenes serotype M49 (strain NZ131).